Here is a 269-residue protein sequence, read N- to C-terminus: Phosphatidate cytidylyltransferase (269 aa).

8 helical membrane passes run 13-33, 50-70, 81-101, 110-130, 138-158, 180-200, 201-221, and 247-267; these read LAAI…TILI, LKLV…FLLP, ISKM…TVLV, VGFI…FIEI, LTYI…AYFV, FAGG…VAQL, PIPY…GQLG, and ILDR…LLAL.

The protein belongs to the CDS family.

The protein localises to the cell membrane. It catalyses the reaction a 1,2-diacyl-sn-glycero-3-phosphate + CTP + H(+) = a CDP-1,2-diacyl-sn-glycerol + diphosphate. Its pathway is phospholipid metabolism; CDP-diacylglycerol biosynthesis; CDP-diacylglycerol from sn-glycerol 3-phosphate: step 3/3. This chain is Phosphatidate cytidylyltransferase (cdsA), found in Bacillus subtilis (strain 168).